The following is a 263-amino-acid chain: Small ribosomal subunit protein uS2 (263 aa).

This sequence belongs to the universal ribosomal protein uS2 family.

The protein is Small ribosomal subunit protein uS2 of Hyphomonas neptunium (strain ATCC 15444).